Here is a 240-residue protein sequence, read N- to C-terminus: Purine nucleoside phosphorylase RP494 (240 aa).

Zn(2+) is bound by residues His-60, Cys-96, and His-113.

This sequence belongs to the purine nucleoside phosphorylase YfiH/LACC1 family. In terms of assembly, homodimer. It depends on Cu(2+) as a cofactor. Requires Zn(2+) as cofactor.

It catalyses the reaction adenosine + phosphate = alpha-D-ribose 1-phosphate + adenine. The catalysed reaction is S-methyl-5'-thioadenosine + phosphate = 5-(methylsulfanyl)-alpha-D-ribose 1-phosphate + adenine. It carries out the reaction inosine + phosphate = alpha-D-ribose 1-phosphate + hypoxanthine. The enzyme catalyses adenosine + H2O + H(+) = inosine + NH4(+). Purine nucleoside enzyme that catalyzes the phosphorolysis of adenosine and inosine nucleosides, yielding D-ribose 1-phosphate and the respective free bases, adenine and hypoxanthine. Also catalyzes the phosphorolysis of S-methyl-5'-thioadenosine into adenine and S-methyl-5-thio-alpha-D-ribose 1-phosphate. Also has adenosine deaminase activity. The protein is Purine nucleoside phosphorylase RP494 of Rickettsia prowazekii (strain Madrid E).